A 348-amino-acid chain; its full sequence is Phosphoribosylformylglycinamidine cyclo-ligase (348 aa).

It belongs to the AIR synthase family.

The protein resides in the cytoplasm. It catalyses the reaction 2-formamido-N(1)-(5-O-phospho-beta-D-ribosyl)acetamidine + ATP = 5-amino-1-(5-phospho-beta-D-ribosyl)imidazole + ADP + phosphate + H(+). It participates in purine metabolism; IMP biosynthesis via de novo pathway; 5-amino-1-(5-phospho-D-ribosyl)imidazole from N(2)-formyl-N(1)-(5-phospho-D-ribosyl)glycinamide: step 2/2. The chain is Phosphoribosylformylglycinamidine cyclo-ligase from Ruegeria sp. (strain TM1040) (Silicibacter sp.).